The following is a 230-amino-acid chain: Acyl-protein thioesterase 1 (230 aa).

Catalysis depends on charge relay system residues S119, D174, and H208. Position 224 is an N6-acetyllysine (K224).

It belongs to the AB hydrolase superfamily. AB hydrolase 2 family. Homodimer.

The protein resides in the cytoplasm. The protein localises to the cell membrane. It is found in the nucleus membrane. Its subcellular location is the endoplasmic reticulum. It catalyses the reaction S-hexadecanoyl-L-cysteinyl-[protein] + H2O = L-cysteinyl-[protein] + hexadecanoate + H(+). The enzyme catalyses 1-hexadecanoyl-sn-glycero-3-phosphocholine + H2O = sn-glycerol 3-phosphocholine + hexadecanoate + H(+). It carries out the reaction a 1-(9Z-octadecenoyl)-2-acyl-sn-glycero-3-phosphocholine + H2O = a 2-acyl-sn-glycero-3-phosphocholine + (9Z)-octadecenoate + H(+). Functionally, acts as an acyl-protein thioesterase. Hydrolyzes fatty acids from S-acylated cysteine residues in proteins such as trimeric G alpha proteins or HRAS. Acts as a palmitoyl thioesterase that catalyzes depalmitoylation of proteins, such as ADRB2, KCNMA1 and SQSTM1. Acts as a negative regulator of autophagy by mediating palmitoylation of SQSTM1, decreasing affinity between SQSTM1 and ATG8 proteins and recruitment of ubiquitinated cargo proteins to autophagosomes. Acts as a lysophospholipase and hydrolyzes lysophosphatidylcholine (lyso-PC). Also hydrolyzes lysophosphatidylethanolamine (lyso-PE), lysophosphatidylinositol (lyso-PI) and lysophosphatidylserine (lyso-PS). Has much higher thioesterase activity than lysophospholipase activity. Contributes to the production of lysophosphatidic acid (LPA) during blood coagulation by recognizing and cleaving plasma phospholipids to generate lysophospholipids which in turn act as substrates for ENPP2 to produce LPA. This is Acyl-protein thioesterase 1 (Lypla1) from Mus musculus (Mouse).